We begin with the raw amino-acid sequence, 353 residues long: Photosystem II D2 protein (353 aa).

Thr-2 is modified (N-acetylthreonine). Thr-2 is modified (phosphothreonine). Residues 41–61 (CAYFALGGWFTGTTFVTSWYT) form a helical membrane-spanning segment. His-118 is a binding site for chlorophyll a. A helical transmembrane segment spans residues 125–141 (GFMLRQFELARSVQLRP). The pheophytin a site is built by Gln-130 and Asn-143. A helical transmembrane segment spans residues 153–166 (VFVSVFLIYPLGQS). His-198 provides a ligand contact to chlorophyll a. A helical transmembrane segment spans residues 208 to 228 (AALLCAIHGATVENTLFEDGD). Residues His-215 and Phe-262 each coordinate a plastoquinone. His-215 serves as a coordination point for Fe cation. His-269 is a Fe cation binding site. Residues 279-295 (GLWMSALGVVGLALNLR) form a helical membrane-spanning segment.

This sequence belongs to the reaction center PufL/M/PsbA/D family. PSII is composed of 1 copy each of membrane proteins PsbA, PsbB, PsbC, PsbD, PsbE, PsbF, PsbH, PsbI, PsbJ, PsbK, PsbL, PsbM, PsbT, PsbX, PsbY, PsbZ, Psb30/Ycf12, at least 3 peripheral proteins of the oxygen-evolving complex and a large number of cofactors. It forms dimeric complexes. Requires The D1/D2 heterodimer binds P680, chlorophylls that are the primary electron donor of PSII, and subsequent electron acceptors. It shares a non-heme iron and each subunit binds pheophytin, quinone, additional chlorophylls, carotenoids and lipids. There is also a Cl(-1) ion associated with D1 and D2, which is required for oxygen evolution. The PSII complex binds additional chlorophylls, carotenoids and specific lipids. as cofactor.

The protein resides in the plastid. It localises to the chloroplast thylakoid membrane. The catalysed reaction is 2 a plastoquinone + 4 hnu + 2 H2O = 2 a plastoquinol + O2. Functionally, photosystem II (PSII) is a light-driven water:plastoquinone oxidoreductase that uses light energy to abstract electrons from H(2)O, generating O(2) and a proton gradient subsequently used for ATP formation. It consists of a core antenna complex that captures photons, and an electron transfer chain that converts photonic excitation into a charge separation. The D1/D2 (PsbA/PsbD) reaction center heterodimer binds P680, the primary electron donor of PSII as well as several subsequent electron acceptors. D2 is needed for assembly of a stable PSII complex. This chain is Photosystem II D2 protein, found in Aethionema grandiflorum (Persian stone-cress).